Here is a 438-residue protein sequence, read N- to C-terminus: Protein phosphatase 2C homolog 2 (438 aa).

In terms of domain architecture, PPM-type phosphatase spans 23–294 (IYGVSAMQGW…DNMTMVIIGF (272 aa)). Asp67, Gly68, Asp236, and Asp285 together coordinate Mn(2+). Residues 370–438 (VLTGSDDTEM…EKTPEESKKD (69 aa)) form a disordered region. Over residues 375 to 387 (DDTEMFDNADEDK) the composition is skewed to acidic residues. The span at 398–438 (GKTDAKEETEAKPAPEAESSKPADGSEKKQDEKTPEESKKD) shows a compositional bias: basic and acidic residues.

Belongs to the PP2C family. The cofactor is Mg(2+). Mn(2+) serves as cofactor.

It is found in the cytoplasm. The protein localises to the nucleus. The catalysed reaction is O-phospho-L-seryl-[protein] + H2O = L-seryl-[protein] + phosphate. It catalyses the reaction O-phospho-L-threonyl-[protein] + H2O = L-threonyl-[protein] + phosphate. Its function is as follows. Dephosphorylating regulator for many key proteins. Negatively regulates the endoplasmic reticulum unfolded protein response. In Hypocrea jecorina (strain QM6a) (Trichoderma reesei), this protein is Protein phosphatase 2C homolog 2.